The sequence spans 131 residues: Metalloproteinase inhibitor (131 aa).

The first 29 residues, methionine 1–alanine 29, serve as a signal peptide directing secretion. Intrachain disulfides connect cysteine 33/cysteine 39 and cysteine 93/cysteine 98.

Functionally, inhibits microbial metallo-proteinases, such as thermolysin, but not serine, thiol, or carboxyl proteinases. This is Metalloproteinase inhibitor (smpI) from Streptomyces nigrescens.